The sequence spans 245 residues: MMKIDLNADLGEGCGNDALLMPLISSANIACGFHAGDAQTMRESVRLALAHGVAMGAHPGFADRENFGRTAMQLPPETIYAETLYQIGALAAIARAEGGRLAHVKPHGMLYNQAAKDAALADAIAQAVKDFDASLILVGLAGSELIRAGARYRLATREEVFADRGYLADGALVPRSEPGALIEDDDEAVSRTLMMVQEGRVRSRDGAWAAVNAQTVCLHGDGAHALAFARRLREAFDARQIQVSA.

The protein belongs to the LamB/PxpA family. Forms a complex composed of PxpA, PxpB and PxpC.

It catalyses the reaction 5-oxo-L-proline + ATP + 2 H2O = L-glutamate + ADP + phosphate + H(+). Functionally, catalyzes the cleavage of 5-oxoproline to form L-glutamate coupled to the hydrolysis of ATP to ADP and inorganic phosphate. The protein is 5-oxoprolinase subunit A of Cronobacter sakazakii (strain ATCC BAA-894) (Enterobacter sakazakii).